The chain runs to 1755 residues: Transposon Ty1-MR1 Gag-Pol polyprotein (1755 aa).

3 stretches are compositionally biased toward polar residues: residues methionine 1–aspartate 31, valine 46–serine 60, and valine 137–histidine 168. 3 disordered regions span residues methionine 1–glutamine 88, valine 137–isoleucine 174, and glutamine 350–serine 420. Residues asparagine 299 to histidine 401 form an RNA-binding region. Residues serine 363 to arginine 372 are compositionally biased toward basic and acidic residues. The segment covering threonine 373–glycine 411 has biased composition (polar residues). Aspartate 461 (for protease activity; shared with dimeric partner) is an active-site residue. The segment at asparagine 583–cysteine 640 is integrase-type zinc finger-like. The region spanning asparagine 660–proline 835 is the Integrase catalytic domain. Mg(2+) contacts are provided by aspartate 671 and aspartate 736. Residues alanine 958–tyrosine 1172 are disordered. Residues serine 960–threonine 969 show a composition bias toward low complexity. The span at serine 1005–threonine 1015 shows a compositional bias: polar residues. The span at glutamate 1038–serine 1053 shows a compositional bias: basic and acidic residues. 2 stretches are compositionally biased toward polar residues: residues tyrosine 1054–glutamate 1082 and serine 1095–leucine 1106. The short motif at lysine 1178 to arginine 1212 is the Bipartite nuclear localization signal element. Positions asparagine 1338–glutamine 1476 constitute a Reverse transcriptase Ty1/copia-type domain. Positions 1346, 1427, 1428, 1610, 1652, and 1685 each coordinate Mg(2+). The region spanning aspartate 1610–lysine 1752 is the RNase H Ty1/copia-type domain.

As to quaternary structure, the capsid protein forms a homotrimer, from which the VLPs are assembled. The protease is a homodimer, whose active site consists of two apposed aspartic acid residues. In terms of processing, initially, virus-like particles (VLPs) are composed of the structural unprocessed proteins Gag and Gag-Pol, and also contain the host initiator methionine tRNA (tRNA(i)-Met) which serves as a primer for minus-strand DNA synthesis, and a dimer of genomic Ty RNA. Processing of the polyproteins occurs within the particle and proceeds by an ordered pathway, called maturation. First, the protease (PR) is released by autocatalytic cleavage of the Gag-Pol polyprotein yielding capsid protein p45 and a Pol-p154 precursor protein. This cleavage is a prerequisite for subsequent processing of Pol-p154 at the remaining sites to release the mature structural and catalytic proteins. Maturation takes place prior to the RT reaction and is required to produce transposition-competent VLPs.

Its subcellular location is the cytoplasm. It localises to the nucleus. It carries out the reaction DNA(n) + a 2'-deoxyribonucleoside 5'-triphosphate = DNA(n+1) + diphosphate. The catalysed reaction is Endonucleolytic cleavage to 5'-phosphomonoester.. Functionally, capsid protein (CA) is the structural component of the virus-like particle (VLP), forming the shell that encapsulates the retrotransposons dimeric RNA genome. The particles are assembled from trimer-clustered units and there are holes in the capsid shells that allow for the diffusion of macromolecules. CA also has nucleocapsid-like chaperone activity, promoting primer tRNA(i)-Met annealing to the multipartite primer-binding site (PBS), dimerization of Ty1 RNA and initiation of reverse transcription. In terms of biological role, the aspartyl protease (PR) mediates the proteolytic cleavages of the Gag and Gag-Pol polyproteins after assembly of the VLP. Its function is as follows. Reverse transcriptase/ribonuclease H (RT) is a multifunctional enzyme that catalyzes the conversion of the retro-elements RNA genome into dsDNA within the VLP. The enzyme displays a DNA polymerase activity that can copy either DNA or RNA templates, and a ribonuclease H (RNase H) activity that cleaves the RNA strand of RNA-DNA heteroduplexes during plus-strand synthesis and hydrolyzes RNA primers. The conversion leads to a linear dsDNA copy of the retrotransposon that includes long terminal repeats (LTRs) at both ends. Integrase (IN) targets the VLP to the nucleus, where a subparticle preintegration complex (PIC) containing at least integrase and the newly synthesized dsDNA copy of the retrotransposon must transit the nuclear membrane. Once in the nucleus, integrase performs the integration of the dsDNA into the host genome. This Saccharomyces cerevisiae (strain ATCC 204508 / S288c) (Baker's yeast) protein is Transposon Ty1-MR1 Gag-Pol polyprotein (TY1B-MR1).